We begin with the raw amino-acid sequence, 380 residues long: Cytochrome b (380 aa).

The next 4 helical transmembrane spans lie at 33-53, 77-98, 113-133, and 178-198; these read FGSL…FLAM, WLIR…YLHV, WNIG…GYVL, and FFAF…IHLL. Heme b-binding residues include His83 and His97. Residues His182 and His196 each contribute to the heme b site. His201 is a binding site for a ubiquinone. 4 helical membrane passes run 226 to 246, 288 to 308, 320 to 340, and 347 to 367; these read YKDL…ALFS, LGGV…PMLH, LSQI…WIGG, and FVLI…IALP.

Belongs to the cytochrome b family. The cytochrome bc1 complex contains 3 respiratory subunits (MT-CYB, CYC1 and UQCRFS1), 2 core proteins (UQCRC1 and UQCRC2) and probably 6 low-molecular weight proteins. It depends on heme b as a cofactor.

The protein resides in the mitochondrion inner membrane. Component of the ubiquinol-cytochrome c reductase complex (complex III or cytochrome b-c1 complex) that is part of the mitochondrial respiratory chain. The b-c1 complex mediates electron transfer from ubiquinol to cytochrome c. Contributes to the generation of a proton gradient across the mitochondrial membrane that is then used for ATP synthesis. This is Cytochrome b (mt-cyb) from Acipenser persicus (Persian sturgeon).